The chain runs to 383 residues: MDDKLMLMIPGPTPVPEAALLALAKHPIGHRTSEFSNMMGEVTQNLKWLHQTESDVLMLNVSGTGAVEAGMINFLSPGDRILVGSNGKFGERWVEVGQAFGLNVEAITAEWGQPLDPDKFAQKLQADTNKEIKAVIITHSETSTGVINDLVAINSHVKEHGQALIIVDAVTSLGAYNVPVDALGLDVVASGSQKGYMIPPGLGFVSVSPKAWEAYKTAKLPKYYLDLGKYRKATAKNTTPFTPPVNLMVALHTTLGMMKKEGLESIFTRHERQKNATRAAMKALNLPLFAADECASPAITAVATPGMEADKIRSLMKKRFDIALAGGQDHLSNKIFRVGHLGFVSDRDILSCIASLEVVLLELGHENFNSGAGVAAAARVFSN.

An N6-(pyridoxal phosphate)lysine modification is found at lysine 194.

Belongs to the class-V pyridoxal-phosphate-dependent aminotransferase family. Heterodimer of a large and a small subunit. Requires pyridoxal 5'-phosphate as cofactor.

It is found in the cytoplasm. Functionally, soluble hydrogenase catalyzes both production and consumption of hydrogen from suitable artificial electron donors or acceptors. This subunit catalyzes the tritium-exchange activity. In Anabaena cylindrica, this protein is Soluble hydrogenase 42 kDa subunit.